Reading from the N-terminus, the 239-residue chain is Putative antitoxin VapB45 (239 aa).

In terms of biological role, possibly the antitoxin component of a type II toxin-antitoxin (TA) system. Its cognate toxin is VapC45. This Mycobacterium tuberculosis (strain ATCC 25618 / H37Rv) protein is Putative antitoxin VapB45.